Reading from the N-terminus, the 166-residue chain is uncharacterized protein (166 aa).

The protein to B.subtilis YpjQ.

This is an uncharacterized protein from Bacillus subtilis (strain 168).